We begin with the raw amino-acid sequence, 543 residues long: uncharacterized protein (543 aa).

In terms of domain architecture, PE spans 1–93; sequence MSFVTAAPEM…GGAYSSAEAA (93 aa). Positions 194–214 are disordered; the sequence is GGAGGPGGPTDVPAGTGGAGG.

Belongs to the mycobacterial PE family. PGRS subfamily.

This is an uncharacterized protein from Mycobacterium tuberculosis (strain CDC 1551 / Oshkosh).